A 286-amino-acid polypeptide reads, in one-letter code: MARQVICWCFTLNNPLSPLSLHELMKYLVYQREQGEAGNIHFQGYIEMKKRTSLAGMKKLIPGAHFEKRRGTQGEARAYAMKEDTRLEGPWEYGEFIPTIEDKLREVMNDMKITGKRPIEYIEECCNTYDKSASTLREFRGELKKKKAIISWELQRKPWMDEVDTLLQERDGRRIIWVYGPQGGEGKTSYAKHLVKTRDAFYSTGGKTADIAFAWDHQELVLFDFPRSFEEYVNYGVIEQLKNGIIQSGKYQSVIKYSDYVEVIVFANFTPRSGMFSDDRIVYVYA.

The region spanning 2–96 (ARQVICWCFT…LEGPWEYGEF (95 aa)) is the CRESS-DNA virus Rep endonuclease domain. An RCR-1 motif is present at residues 9–12 (CFTL). Positions 33 and 41 each coordinate a divalent metal cation. The RCR-2 motif lies at 41-43 (HFQ). The Nuclear localization signal motif lies at 50 to 70 (KRTSLAGMKKLIPGAHFEKRR). Tyr-79 (for DNA cleavage activity) is an active-site residue. Residues 79-82 (YAMK) carry the RCR-3 motif. Residue Asp-84 participates in a divalent metal cation binding. The short motif at 96 to 102 (FIPTIED) is the Nuclear localization signal element. 180–188 (GPQGGEGKT) provides a ligand contact to ATP.

Belongs to the nanoviridea/circoviridae replication-associated protein family. Homooligomer (Potential). Rep binds to repeated DNA motifs (iterons). The cofactor is Mg(2+). Requires Mn(2+) as cofactor.

The protein resides in the host nucleus. It carries out the reaction ATP + H2O = ADP + phosphate + H(+). Its function is as follows. Essential for the replication of all genomic viral ssDNA (trans-replication). The closed circular ssDNA genome is first converted to a superhelical dsDNA. Rep binds a specific hairpin at the genome origin of replication. Introduces an endonucleolytic nick within the conserved sequence 5'-A[GT]TATTAC-3' in the intergenic region of the genome, thereby initiating the rolling circle replication (RCR). Following cleavage, binds covalently to the 5'-phosphate of DNA as a tyrosyl ester. The cleavage gives rise to a free 3'-OH that serves as a primer for the cellular DNA polymerase. The polymerase synthesizes the (+) strand DNA by rolling circle mechanism. After one round of replication, a Rep-catalyzed nucleotidyl transfer reaction releases a circular single-stranded virus genome, thereby terminating the replication. Displays origin-specific DNA cleavage, nucleotidyl transferase, ATPase and helicase activities. The protein is Master replication protein (DNA-R) of Astragalus sinicus (Chinese milk vetch).